Consider the following 258-residue polypeptide: UPF0246 protein YaaA (258 aa).

Belongs to the UPF0246 family.

This chain is UPF0246 protein YaaA, found in Escherichia coli (strain K12 / MC4100 / BW2952).